The sequence spans 76 residues: MAKIIRIKGKIVGKDEPMVFSKEYNVLKESDALEIMYSDMGSKHSVKRANIQVLEISEISQEEVLDPIVRKTLEMY.

The protein belongs to the eukaryotic ribosomal protein eL20 family. As to quaternary structure, part of the 50S ribosomal subunit. Binds 23S rRNA.

This is Large ribosomal subunit protein eL20 from Methanococcus vannielii (strain ATCC 35089 / DSM 1224 / JCM 13029 / OCM 148 / SB).